The chain runs to 541 residues: Tegument protein UL21 homolog (541 aa).

Belongs to the alphaherpesvirinae UL21 protein family. As to quaternary structure, interacts (via C-terminus) with UL16.

It is found in the virion tegument. The protein localises to the host cytoplasm. The protein resides in the host nucleus. May participate in DNA packaging/capsid maturation events. Promotes efficient incorporation of tegument proteins UL46, UL49, and US3 homologs into virions. May also play a role in capsid transport to the trans-Golgi network (TGN). The polypeptide is Tegument protein UL21 homolog (Homo sapiens (Human)).